Reading from the N-terminus, the 338-residue chain is Nucleoid-associated protein PA14_59050 (338 aa).

It belongs to the YejK family.

It is found in the cytoplasm. Its subcellular location is the nucleoid. This chain is Nucleoid-associated protein PA14_59050, found in Pseudomonas aeruginosa (strain UCBPP-PA14).